A 202-amino-acid polypeptide reads, in one-letter code: T-cell surface glycoprotein CD3 epsilon chain (202 aa).

A signal peptide spans 1–21; the sequence is MPSGSLWRVLGLCLLSVGAWG. The Extracellular portion of the chain corresponds to 22–125; it reads QEDNEDPLEP…NCVEVDTMTA (104 aa). The region spanning 33–107 is the Ig-like domain; that stretch reads PQTSASARYK…TSNSLEKNYL (75 aa). Cysteine 54 and cysteine 96 are oxidised to a cystine. A helical transmembrane segment spans residues 126–146; the sequence is VAIVVADVCITLGFLLLVYYW. Residues 147–202 are Cytoplasmic-facing; sequence SKNKKASSVTMMRGPGAGGRPRGQNKEKPPPVPNPDYEPIRKGQQDLYSGLNQRGI. The disordered stretch occupies residues 156–202; that stretch reads TMMRGPGAGGRPRGQNKEKPPPVPNPDYEPIRKGQQDLYSGLNQRGI. The segment at 170–187 is NUMB-binding region; sequence QNKEKPPPVPNPDYEPIR. An ITAM domain is found at 173–200; it reads EKPPPVPNPDYEPIRKGQQDLYSGLNQR. The proline-rich sequence stretch occupies residues 174–181; sequence KPPPVPNP. A phosphotyrosine mark is found at tyrosine 183 and tyrosine 194. Over residues 192-202 the composition is skewed to polar residues; it reads DLYSGLNQRGI.

The TCR-CD3 complex is composed of a CD3D/CD3E and a CD3G/CD3E heterodimers that preferentially associate with TCRalpha and TCRbeta, respectively, to form TCRalpha/CD3E/CD3G and TCRbeta/CD3G/CD3E trimers. In turn, the hexamer interacts with CD3Z homodimer to form the TCR-CD3 complex. Alternatively, TCRalpha and TCRbeta can be replaced by TCRgamma and TCRdelta. Interacts with CD6. Interacts (via Proline-rich sequence) with NCK1; the interaction is ligand dependent but independent of tyrosine kinase activation. Phosphorylated on Tyr residues after T-cell receptor triggering by LCK in association with CD4/CD8.

The protein resides in the cell membrane. Its function is as follows. Part of the TCR-CD3 complex present on T-lymphocyte cell surface that plays an essential role in adaptive immune response. When antigen presenting cells (APCs) activate T-cell receptor (TCR), TCR-mediated signals are transmitted across the cell membrane by the CD3 chains CD3D, CD3E, CD3G and CD3Z. All CD3 chains contain immunoreceptor tyrosine-based activation motifs (ITAMs) in their cytoplasmic domain. Upon TCR engagement, these motifs become phosphorylated by Src family protein tyrosine kinases LCK and FYN, resulting in the activation of downstream signaling pathways. In addition of this role of signal transduction in T-cell activation, CD3E plays an essential role in correct T-cell development. Also participates in internalization and cell surface down-regulation of TCR-CD3 complexes via endocytosis sequences present in CD3E cytosolic region. In addition to its role as a TCR coreceptor, it serves as a receptor for ITPRIPL1. Ligand recognition inhibits T-cell activation by promoting interaction with NCK1, which prevents CD3E-ZAP70 interaction and blocks the ERK-NFkB signaling cascade and calcium influx. The protein is T-cell surface glycoprotein CD3 epsilon chain (CD3E) of Felis catus (Cat).